An 865-amino-acid chain; its full sequence is Protein translocase subunit SecA (865 aa).

ATP is bound by residues Gln93, 111 to 115 (GEGKT), and Asp501. Zn(2+) contacts are provided by Cys841, Cys843, Cys852, and Cys853.

Belongs to the SecA family. Monomer and homodimer. Part of the essential Sec protein translocation apparatus which comprises SecA, SecYEG and auxiliary proteins SecDF-YajC and YidC. The cofactor is Zn(2+).

It is found in the cell inner membrane. The protein localises to the cytoplasm. The catalysed reaction is ATP + H2O + cellular proteinSide 1 = ADP + phosphate + cellular proteinSide 2.. Part of the Sec protein translocase complex. Interacts with the SecYEG preprotein conducting channel. Has a central role in coupling the hydrolysis of ATP to the transfer of proteins into and across the cell membrane, serving as an ATP-driven molecular motor driving the stepwise translocation of polypeptide chains across the membrane. In Helicobacter pylori (strain J99 / ATCC 700824) (Campylobacter pylori J99), this protein is Protein translocase subunit SecA.